Here is a 248-residue protein sequence, read N- to C-terminus: 14-3-3 protein sigma (248 aa).

Ser-5, Ser-74, and Ser-248 each carry phosphoserine.

Belongs to the 14-3-3 family. Homodimer. Interacts with KRT17 and SAMSN1. Found in a complex with XPO7, EIF4A1, ARHGAP1, VPS26A, VPS29 and VPS35. Interacts with GAB2. Interacts with SRPK2. Interacts with COPS6. Interacts with COP1; this interaction leads to proteasomal degradation. Interacts with the 'Thr-369' phosphorylated form of DAPK2. Interacts with PI4KB. Interacts with SLITRK1. Interacts with LRRK2; this interaction is dependent on LRRK2 phosphorylation. Interacts with PKP3 (via N-terminus); the interaction maintains the cytoplasmic pool of PKP3, facilitates PKP3 exchange at desmosomes and restricts PKP3 localization to existing desmosome cell junctions. Interacts with LCP2. Post-translationally, ubiquitinated. Ubiquitination by RFFL induces proteasomal degradation and indirectly regulates p53/TP53 activation. In terms of tissue distribution, expressed in dorsal skin (at protein level). Expressed in the basal layer of skin epithelium and in outer root sheath of hair follicle.

The protein resides in the cytoplasm. It is found in the nucleus. It localises to the secreted. Functionally, adapter protein implicated in the regulation of a large spectrum of both general and specialized signaling pathways. Binds to a large number of partners, usually by recognition of a phosphoserine or phosphothreonine motif. Binding generally results in the modulation of the activity of the binding partner. Promotes cytosolic retention of GBP1 GTPase by binding to phosphorylated GBP1, thereby inhibiting the innate immune response. Also acts as a TP53/p53-regulated inhibitor of G2/M progression. When bound to KRT17, regulates protein synthesis and epithelial cell growth by stimulating Akt/mTOR pathway. Acts to maintain desmosome cell junction adhesion in epithelial cells via interacting with and sequestering PKP3 to the cytoplasm, thereby restricting its translocation to existing desmosome structures and therefore maintaining desmosome protein homeostasis. Also acts to facilitate PKP3 exchange at desmosome plaques, thereby maintaining keratinocyte intercellular adhesion. May also regulate MDM2 autoubiquitination and degradation and thereby activate p53/TP53. This Mus musculus (Mouse) protein is 14-3-3 protein sigma (Sfn).